We begin with the raw amino-acid sequence, 92 residues long: Large ribosomal subunit protein bL25 (92 aa).

Belongs to the bacterial ribosomal protein bL25 family. Part of the 50S ribosomal subunit; part of the 5S rRNA/L5/L18/L25 subcomplex. Contacts the 5S rRNA. Binds to the 5S rRNA independently of L5 and L18.

This is one of the proteins that binds to the 5S RNA in the ribosome where it forms part of the central protuberance. The chain is Large ribosomal subunit protein bL25 from Vibrio vulnificus (strain CMCP6).